A 271-amino-acid chain; its full sequence is MSSDQVHLGHRARKRFGQNFLNDPYIIDGIVSSINPLPGQNLVEIGPGLGALTEPVGRLVDKFSVIELDRDLAKRLRHHPDLADKLTIYEGDAMRFDFTQLIKPNNKLRIFGNLPYNISTPLMFHLFTFHEHVEDMHFMLQKEVVNRLAAGPGCKAYGRLTVMAQYYSRVTPVLEVPPESFTPAPKVDSAVVRLTPYEVLPHPCTNLKWLDRVCREGFNQRRKTIRNCYKALLTVEQLEDLGVNPGLRPENITLQQFVKMANWLDANHQNA.

S-adenosyl-L-methionine is bound by residues Asn-19, Leu-21, Gly-46, Glu-67, Asp-92, and Asn-113.

It belongs to the class I-like SAM-binding methyltransferase superfamily. rRNA adenine N(6)-methyltransferase family. RsmA subfamily.

The protein resides in the cytoplasm. It catalyses the reaction adenosine(1518)/adenosine(1519) in 16S rRNA + 4 S-adenosyl-L-methionine = N(6)-dimethyladenosine(1518)/N(6)-dimethyladenosine(1519) in 16S rRNA + 4 S-adenosyl-L-homocysteine + 4 H(+). Its function is as follows. Specifically dimethylates two adjacent adenosines (A1518 and A1519) in the loop of a conserved hairpin near the 3'-end of 16S rRNA in the 30S particle. May play a critical role in biogenesis of 30S subunits. This Photobacterium profundum (strain SS9) protein is Ribosomal RNA small subunit methyltransferase A.